The following is a 95-amino-acid chain: Aspartyl/glutamyl-tRNA(Asn/Gln) amidotransferase subunit C (95 aa).

The protein belongs to the GatC family. In terms of assembly, heterotrimer of A, B and C subunits.

It carries out the reaction L-glutamyl-tRNA(Gln) + L-glutamine + ATP + H2O = L-glutaminyl-tRNA(Gln) + L-glutamate + ADP + phosphate + H(+). It catalyses the reaction L-aspartyl-tRNA(Asn) + L-glutamine + ATP + H2O = L-asparaginyl-tRNA(Asn) + L-glutamate + ADP + phosphate + 2 H(+). Its function is as follows. Allows the formation of correctly charged Asn-tRNA(Asn) or Gln-tRNA(Gln) through the transamidation of misacylated Asp-tRNA(Asn) or Glu-tRNA(Gln) in organisms which lack either or both of asparaginyl-tRNA or glutaminyl-tRNA synthetases. The reaction takes place in the presence of glutamine and ATP through an activated phospho-Asp-tRNA(Asn) or phospho-Glu-tRNA(Gln). In Chromohalobacter salexigens (strain ATCC BAA-138 / DSM 3043 / CIP 106854 / NCIMB 13768 / 1H11), this protein is Aspartyl/glutamyl-tRNA(Asn/Gln) amidotransferase subunit C.